The sequence spans 54 residues: ATP synthase F(0) complex subunit 8 (54 aa).

Residues 13-35 traverse the membrane as a helical segment; the sequence is ALSLWVCFPLMMLSLSSFLPLTL.

It belongs to the ATPase protein 8 family. In terms of assembly, component of the ATP synthase complex composed at least of ATP5F1A/subunit alpha, ATP5F1B/subunit beta, ATP5MC1/subunit c (homooctomer), MT-ATP6/subunit a, MT-ATP8/subunit 8, ATP5ME/subunit e, ATP5MF/subunit f, ATP5MG/subunit g, ATP5MK/subunit k, ATP5MJ/subunit j, ATP5F1C/subunit gamma, ATP5F1D/subunit delta, ATP5F1E/subunit epsilon, ATP5PF/subunit F6, ATP5PB/subunit b, ATP5PD/subunit d, ATP5PO/subunit OSCP. ATP synthase complex consists of a soluble F(1) head domain (subunits alpha(3) and beta(3)) - the catalytic core - and a membrane F(0) domain - the membrane proton channel (subunits c, a, 8, e, f, g, k and j). These two domains are linked by a central stalk (subunits gamma, delta, and epsilon) rotating inside the F1 region and a stationary peripheral stalk (subunits F6, b, d, and OSCP).

The protein resides in the mitochondrion membrane. In terms of biological role, subunit 8, of the mitochondrial membrane ATP synthase complex (F(1)F(0) ATP synthase or Complex V) that produces ATP from ADP in the presence of a proton gradient across the membrane which is generated by electron transport complexes of the respiratory chain. ATP synthase complex consist of a soluble F(1) head domain - the catalytic core - and a membrane F(1) domain - the membrane proton channel. These two domains are linked by a central stalk rotating inside the F(1) region and a stationary peripheral stalk. During catalysis, ATP synthesis in the catalytic domain of F(1) is coupled via a rotary mechanism of the central stalk subunits to proton translocation. In vivo, can only synthesize ATP although its ATP hydrolase activity can be activated artificially in vitro. Part of the complex F(0) domain. The polypeptide is ATP synthase F(0) complex subunit 8 (Myxine glutinosa (Atlantic hagfish)).